The following is a 247-amino-acid chain: Adenosylcobinamide-GDP ribazoletransferase (247 aa).

A run of 5 helical transmembrane segments spans residues 34–54, 57–77, 113–133, 138–158, and 194–214; these read IITFPLIGLLLGAISGLVFMV, AWCGAPLAALFSVLVLALMTG, GGLALIFVVLAKILVLSELAL, ILASLAAACAVSRGTAALLMY, and VLLLGMHGVAAMVVTMVAIFI.

The protein belongs to the CobS family. Requires Mg(2+) as cofactor.

The protein resides in the cell inner membrane. It catalyses the reaction alpha-ribazole + adenosylcob(III)inamide-GDP = adenosylcob(III)alamin + GMP + H(+). It carries out the reaction alpha-ribazole 5'-phosphate + adenosylcob(III)inamide-GDP = adenosylcob(III)alamin 5'-phosphate + GMP + H(+). Its pathway is cofactor biosynthesis; adenosylcobalamin biosynthesis; adenosylcobalamin from cob(II)yrinate a,c-diamide: step 7/7. Functionally, joins adenosylcobinamide-GDP and alpha-ribazole to generate adenosylcobalamin (Ado-cobalamin). Also synthesizes adenosylcobalamin 5'-phosphate from adenosylcobinamide-GDP and alpha-ribazole 5'-phosphate. The chain is Adenosylcobinamide-GDP ribazoletransferase from Shigella flexneri serotype 5b (strain 8401).